The following is a 370-amino-acid chain: MSKQWASGTNGAFKRQVSSFRETISKQHPIYKPAKGRYWLYVSLACPWAHRTLITRALKGLTSVIGCSVVHWHLDEKGWRFLDMEKQLEDSEDFLEHWHDVAGGIRTAKEDSSKSFAEIKNDSQRFMVDATNEPHYGYKRISDLYYKSDPQYSARFTVPVLWDLETQTIVNNESSEIIRILNSSAFDEFVDDDHKKTDLVPAQLKTQIDDFNSWVYDSINNGVYKTGFAEKAEVYESEVNNVFEHLDKVEKILSDKYSKLKAKYGEEDRQKILGEFFTVGDQLTEADIRLYTTVIRFDPVYVQHFKCNFTSIRAGYPFIHLWVRNLYWNYDAFRYTTDFDHIKLHYTRSHTRINPLGITPLGPKPDIRPL.

Arginine 15 is a glutathione binding site. Catalysis depends on cysteine 46, which acts as the Nucleophile. Glutathione contacts are provided by tryptophan 79, arginine 155, valine 158, glutamate 173, and serine 174. Residues 201–353 (PAQLKTQIDD…LHYTRSHTRI (153 aa)) enclose the GST C-terminal domain.

This sequence belongs to the GST superfamily. Omega family. In terms of assembly, homodimer.

Its subcellular location is the cytoplasm. The enzyme catalyses RX + glutathione = an S-substituted glutathione + a halide anion + H(+). It catalyses the reaction L-dehydroascorbate + 2 glutathione = glutathione disulfide + L-ascorbate. Active as '1-Cys' thiol transferase against beta-hydroxyethyl disulfide (HED), as dehydroascorbate reductase and as dimethylarsinic acid reductase, while not active against the standard GST substrate 1-chloro-2,4-dinitrobenzene (CDNB). May be involved in cell wall organization and biogenesis. This is Glutathione S-transferase omega-like 2 from Saccharomyces cerevisiae (strain ATCC 204508 / S288c) (Baker's yeast).